Here is a 249-residue protein sequence, read N- to C-terminus: Low affinity immunoglobulin gamma Fc region receptor III-A (249 aa).

Positions 1–20 (MWYLLLPTALLLTVSSGVGA) are cleaved as a signal peptide. The Extracellular segment spans residues 21 to 203 (GLQKAVVNLD…SPSSFLPWHQ (183 aa)). Ig-like C2-type domains follow at residues 31–103 (PEWV…QLDV) and 117–188 (FQEG…LQIS). Disulfide bonds link C46/C88 and C127/C171. N-linked (GlcNAc...) asparagine glycans are attached at residues N55 and N62. N-linked (GlcNAc...) asparagine glycosylation is present at N179. The chain crosses the membrane as a helical span at residues 204 to 224 (ITFCLLIGLLFAIDTVLYFSV). The Cytoplasmic segment spans residues 225-249 (QRSLQSSVAVYEEPKLHWSKEPQDK). Position 235 is a phosphotyrosine (Y235).

In terms of assembly, forms a heterooligomeric complex with ITAM-containing signaling subunits FCER1G. Interacts (via transmembrane domain) with signaling subunits; this interaction is a prerequisite for receptor complex expression on the cell surface and intracellular signal transduction. Binds the Fc region of antigen-complexed IgG. In terms of processing, N-glycosylated. Post-translationally, phosphorylated following receptor ligation.

The protein resides in the cell membrane. Its function is as follows. Receptor for the invariable Fc fragment of immunoglobulin gamma (IgG). Binds with intermediate affinity to both IgG2a and IgG2b. Can bind to IgG2a and IgG2b monomers. Does not display binding to IgG1 or IgG3. Recognizes neutralizing virus-specific IgGs displayed on the cell surface of infected cells and triggers antibody-dependent cellular cytotoxicity (ADCC). Confers protection to lethal influenza virus infection. On splenic dendritic cells, uptakes antigen immune complexes and efficiently divert them into MHC class I and II antigen presentation pathways to provide for superior priming of CD4-positive and CD8-positive T cell immune responses. Mediates neutrophil activation by IgG complexes redundantly with FCGR2A. Plays a role in promoting bone resorption by enhancing osteoclast differentiation following binding to IgG2a. Also acts as a receptor for the Fc region of immunoglobulin epsilon (IgE). Binds with low affinity to both the a and b allotypes of IgE. Has also been shown to bind to IgE allotype a only but not to allotype b. Binds aggregated IgE but not the monomeric form and bound monomeric IgG is readily displaced by IgE complexes. Binding to IgE promotes macrophage-mediated phagocytosis, antigen presentation to T cells, production of pro-inflammatory cytokines and the late phase of cutaneous allergic reactions. Mediates enhanced ADCC in response to afucosylated IgGs. In Rattus norvegicus (Rat), this protein is Low affinity immunoglobulin gamma Fc region receptor III-A.